Consider the following 764-residue polypeptide: DNA-binding protein SATB1 (764 aa).

The segment covering 1–15 (MDHLNEATQGKEHSE) has biased composition (basic and acidic residues). Residues 1–56 (MDHLNEATQGKEHSEMSNNVSDPKGPPAKIARLEQNGSPLGRGRLGSTGGKMQGVP) form a disordered region. A Nuclear localization signal motif is present at residues 20–40 (VSDPKGPPAKIARLEQNGSPL). Gly residues predominate over residues 43–52 (GRLGSTGGKM). Lysine 51 participates in a covalent cross-link: Glycyl lysine isopeptide (Lys-Gly) (interchain with G-Cter in SUMO2). The region spanning 71–172 (GTMLPVFCVV…VVTLKIQLHS (102 aa)) is the CMP domain. Lysine 136 is modified (N6-acetyllysine). The Protein interaction motif lies at 139–143 (PVPLS). In terms of domain architecture, CUTL spans 175–248 (KLEDLPPEQW…WYKHFKKTKD (74 aa)). At serine 185 the chain carries Phosphoserine. The nuclear matrix targeting sequence (NMTS) stretch occupies residues 224 to 278 (YYANVSAAKCQEFGRWYKHFKKTKDMMVEMDSLSELSQQGANHVNFGQQPVPGNT). Positions 224-278 (YYANVSAAKCQEFGRWYKHFKKTKDMMVEMDSLSELSQQGANHVNFGQQPVPGNT) match the Nuclear matrix targeting sequence (NMTS) motif. Positions 266 to 296 (HVNFGQQPVPGNTAEQPPSPAQLSHGSQPSV) are enriched in polar residues. A disordered region spans residues 266–307 (HVNFGQQPVPGNTAEQPPSPAQLSHGSQPSVRTPLPNLHPGL). Positions 361-448 (LEQQVSTNTE…ERDRIYQDER (88 aa)) form a DNA-binding region, CUT 1. Residues glutamine 390, 400–410 (RTQGLLSEILR), and asparagine 425 contribute to the DNA site. The interval 450-474 (RSLNAASAMGPAPLLSTPPSRPPQV) is disordered. The segment at residues 484–571 (NGKPENNTMN…ERDAIYEQES (88 aa)) is a DNA-binding region (CUT 2). A disordered region spans residues 591–650 (QIQQQQQQQQQQQQQQQPPPPPPQPQPQPQAGPRLPPRQPTVASSAESDEENRQKTRPRT). Over residues 593–606 (QQQQQQQQQQQQQQ) the composition is skewed to low complexity. Residues 607-629 (QPPPPPPQPQPQPQAGPRLPPRQ) are compositionally biased toward pro residues. Position 638 is a phosphoserine (serine 638). A DNA-binding region (homeobox) is located at residues 646-705 (TRPRTKISVEALGILQSFIQDVGLYPDEEAIQTLSAQLDLPKYTIIKFFQNQRYYLKHHG). A Glycyl lysine isopeptide (Lys-Gly) (interchain with G-Cter in SUMO) cross-link involves residue lysine 745.

It belongs to the CUT homeobox family. As to quaternary structure, interacts with PCAF. Interacts with sumoylated PML and HDAC1 Tat via the CMP domain. Also interacts with DYNLT3 and POLR2J2. Binds to EP300. Homodimer. Part of the nuclear protein complex gamma-globin promoter and enhancer binding factor (gamma-PE) composed at least of SATB1 and HOXB2. Interaction with CtBP1 when not acetylated stabilizes attachment to DNA and promotes transcription repression. Interacts with CUX1 (via DNA-binding domains); the interaction inhibits the attachment of both proteins to DNA. In terms of processing, sumoylated. Sumoylation promotes cleavage by caspases. Post-translationally, phosphorylated by PKC. Acetylated by PCAF. Phosphorylated form interacts with HDAC1, but unphosphorylated form interacts with PCAF. DNA binding properties are activated by phosphorylation and inactivated by acetylation. In opposition, gene expression is down-regulated by phosphorylation but up-regulated by acetylation. Cleaved at Asp-254 by caspase-3 and caspase-6 during T-cell apoptosis in thymus and during B-cell stimulation. The cleaved forms cannot dimerize and lose transcription regulation function because of impaired DNA and chromatin association. In terms of tissue distribution, expressed in the subventricular zone, rostral migratory stream and in the olfactory bulb (at protein level). Mainly expressed in thymus, spleen, and lymph nodes with a lower level observed in the brain.

It is found in the nucleus. Its subcellular location is the PML body. Functionally, required for the switching of fetal globin species, and beta- and gamma-globin genes regulation during erythroid differentiation. Plays a role in chromatin organization and nuclear architecture during apoptosis. Crucial silencing factor contributing to the initiation of X inactivation mediated by Xist RNA that occurs during embryogenesis and in lymphoma. Binds to DNA at special AT-rich sequences, the consensus SATB1-binding sequence (CSBS), at nuclear matrix- or scaffold-associated regions. Thought to recognize the sugar-phosphate structure of double-stranded DNA. Transcriptional repressor controlling nuclear and viral gene expression in a phosphorylated and acetylated status-dependent manner, by binding to matrix attachment regions (MARs) of DNA and inducing a local chromatin-loop remodeling. Acts as a docking site for several chromatin remodeling enzymes and also by recruiting corepressors (HDACs) or coactivators (HATs) directly to promoters and enhancers. Modulates genes that are essential in the maturation of the immune T-cell CD8SP from thymocytes. Promotes neuronal differentiation of neural stem/progenitor cells in the adult subventricular zone, possibly by positively regulating the expression of NEUROD1. The protein is DNA-binding protein SATB1 (Satb1) of Mus musculus (Mouse).